We begin with the raw amino-acid sequence, 299 residues long: Ribosomal protein L11 methyltransferase (299 aa).

Residues Thr-140, Gly-161, Asp-183, and Asn-232 each contribute to the S-adenosyl-L-methionine site.

It belongs to the methyltransferase superfamily. PrmA family.

It localises to the cytoplasm. The catalysed reaction is L-lysyl-[protein] + 3 S-adenosyl-L-methionine = N(6),N(6),N(6)-trimethyl-L-lysyl-[protein] + 3 S-adenosyl-L-homocysteine + 3 H(+). In terms of biological role, methylates ribosomal protein L11. This chain is Ribosomal protein L11 methyltransferase, found in Synechococcus elongatus (strain ATCC 33912 / PCC 7942 / FACHB-805) (Anacystis nidulans R2).